Consider the following 548-residue polypeptide: CTP synthase (548 aa).

The amidoligase domain stretch occupies residues 1–270 (MTKYVFVTGG…DNIVCEALGL (270 aa)). S13 is a CTP binding site. S13 is a binding site for UTP. ATP is bound by residues 14 to 19 (SLGKGI) and D71. 2 residues coordinate Mg(2+): D71 and E144. Residues 151–153 (DIE), 191–196 (KTKPTQ), and K227 each bind CTP. UTP-binding positions include 191–196 (KTKPTQ) and K227. The 251-residue stretch at 295 to 545 (TIGMVGKYVD…IEAAIANHAR (251 aa)) folds into the Glutamine amidotransferase type-1 domain. G356 contributes to the L-glutamine binding site. C383 serves as the catalytic Nucleophile; for glutamine hydrolysis. L-glutamine is bound by residues 384–387 (LGMQ), E407, and R473. Active-site residues include H518 and E520.

The protein belongs to the CTP synthase family. In terms of assembly, homotetramer.

The catalysed reaction is UTP + L-glutamine + ATP + H2O = CTP + L-glutamate + ADP + phosphate + 2 H(+). It catalyses the reaction L-glutamine + H2O = L-glutamate + NH4(+). The enzyme catalyses UTP + NH4(+) + ATP = CTP + ADP + phosphate + 2 H(+). Its pathway is pyrimidine metabolism; CTP biosynthesis via de novo pathway; CTP from UDP: step 2/2. With respect to regulation, allosterically activated by GTP, when glutamine is the substrate; GTP has no effect on the reaction when ammonia is the substrate. The allosteric effector GTP functions by stabilizing the protein conformation that binds the tetrahedral intermediate(s) formed during glutamine hydrolysis. Inhibited by the product CTP, via allosteric rather than competitive inhibition. Its function is as follows. Catalyzes the ATP-dependent amination of UTP to CTP with either L-glutamine or ammonia as the source of nitrogen. Regulates intracellular CTP levels through interactions with the four ribonucleotide triphosphates. The protein is CTP synthase of Bordetella petrii (strain ATCC BAA-461 / DSM 12804 / CCUG 43448).